The primary structure comprises 256 residues: MLNIGPFSFHSRLLLGTGKFPDFDVQQKAIDVSEAEVLTFAVRRMDIFDAKQPNLLEKLDVKKYKLLPNTAGAKNAEEAVRIAKLAKASGLCDMIKVEVIGDDRTLLPDPVETLRASEMLLEEGFIVLPYTSDDVVLARKLQELGVHAIMPGASPIGSGLGIVNPLNLSFIIEQATVPVIVDAGIGSPADAAFAMELGADGVLLNTAVSGAKDPIKMAQAMKLSIEAGRLGFEAGRIARKRCATASSPLEGMSVVE.

The active-site Schiff-base intermediate with DXP is Lys-96. 1-deoxy-D-xylulose 5-phosphate contacts are provided by residues Gly-157, 183–184 (AG), and 205–206 (NT).

The protein belongs to the ThiG family. Homotetramer. Forms heterodimers with either ThiH or ThiS.

It is found in the cytoplasm. The catalysed reaction is [ThiS sulfur-carrier protein]-C-terminal-Gly-aminoethanethioate + 2-iminoacetate + 1-deoxy-D-xylulose 5-phosphate = [ThiS sulfur-carrier protein]-C-terminal Gly-Gly + 2-[(2R,5Z)-2-carboxy-4-methylthiazol-5(2H)-ylidene]ethyl phosphate + 2 H2O + H(+). The protein operates within cofactor biosynthesis; thiamine diphosphate biosynthesis. Catalyzes the rearrangement of 1-deoxy-D-xylulose 5-phosphate (DXP) to produce the thiazole phosphate moiety of thiamine. Sulfur is provided by the thiocarboxylate moiety of the carrier protein ThiS. In vitro, sulfur can be provided by H(2)S. In Bacillus anthracis, this protein is Thiazole synthase.